The sequence spans 328 residues: Phenylalanine--tRNA ligase alpha subunit (328 aa).

Glutamate 253 serves as a coordination point for Mg(2+).

Belongs to the class-II aminoacyl-tRNA synthetase family. Phe-tRNA synthetase alpha subunit type 1 subfamily. As to quaternary structure, tetramer of two alpha and two beta subunits. Mg(2+) serves as cofactor.

The protein localises to the cytoplasm. It carries out the reaction tRNA(Phe) + L-phenylalanine + ATP = L-phenylalanyl-tRNA(Phe) + AMP + diphosphate + H(+). The protein is Phenylalanine--tRNA ligase alpha subunit of Actinobacillus pleuropneumoniae serotype 5b (strain L20).